Reading from the N-terminus, the 291-residue chain is Beta-lactamase Toho-1 (291 aa).

An N-terminal signal peptide occupies residues 1–29 (MMTQSIRRSMLTVMATLPLLFSSATLHAQ). Ser-73 serves as the catalytic Acyl-ester intermediate. Residue 237–239 (KTG) coordinates substrate.

Belongs to the class-A beta-lactamase family. As to quaternary structure, monomer.

It carries out the reaction a beta-lactam + H2O = a substituted beta-amino acid. In terms of biological role, has strong cefotaxime-hydrolyzing activity. This Escherichia coli protein is Beta-lactamase Toho-1 (bla).